The sequence spans 119 residues: Large ribosomal subunit protein uL18 (119 aa).

This sequence belongs to the universal ribosomal protein uL18 family. In terms of assembly, part of the 50S ribosomal subunit; part of the 5S rRNA/L5/L18/L25 subcomplex. Contacts the 5S and 23S rRNAs.

This is one of the proteins that bind and probably mediate the attachment of the 5S RNA into the large ribosomal subunit, where it forms part of the central protuberance. This Clostridium botulinum (strain 657 / Type Ba4) protein is Large ribosomal subunit protein uL18.